The chain runs to 373 residues: Probable pectin lyase D (373 aa).

A signal peptide spans 1–24; it reads MKYAAALTAVAALAARAAAVGVSG. Intrachain disulfides connect Cys82–Cys101 and Cys91–Cys225. N-linked (GlcNAc...) asparagine glycosylation is present at Asn128. Arg255 is an active-site residue. Asn274 carries N-linked (GlcNAc...) asparagine glycosylation. A disulfide bond links Cys321 and Cys329. An N-linked (GlcNAc...) asparagine glycan is attached at Asn348. Positions 354–366 are enriched in low complexity; the sequence is LPSADAASTSPAS. A disordered region spans residues 354–373; it reads LPSADAASTSPASNAGQGNL.

This sequence belongs to the polysaccharide lyase 1 family.

The protein localises to the secreted. The catalysed reaction is Eliminative cleavage of (1-&gt;4)-alpha-D-galacturonan methyl ester to give oligosaccharides with 4-deoxy-6-O-methyl-alpha-D-galact-4-enuronosyl groups at their non-reducing ends.. Pectinolytic enzymes consist of four classes of enzymes: pectin lyase, polygalacturonase, pectin methylesterase and rhamnogalacturonase. Among pectinolytic enzymes, pectin lyase is the most important in depolymerization of pectin, since it cleaves internal glycosidic bonds of highly methylated pectins. In Aspergillus niger (strain ATCC MYA-4892 / CBS 513.88 / FGSC A1513), this protein is Probable pectin lyase D (pelD).